Reading from the N-terminus, the 444-residue chain is Tubulin beta-7 chain (444 aa).

GTP-binding residues include Gln-11, Glu-69, Ser-138, Gly-142, Thr-143, Gly-144, Asn-204, and Asn-226. Glu-69 lines the Mg(2+) pocket.

This sequence belongs to the tubulin family. Dimer of alpha and beta chains. A typical microtubule is a hollow water-filled tube with an outer diameter of 25 nm and an inner diameter of 15 nM. Alpha-beta heterodimers associate head-to-tail to form protofilaments running lengthwise along the microtubule wall with the beta-tubulin subunit facing the microtubule plus end conferring a structural polarity. Microtubules usually have 13 protofilaments but different protofilament numbers can be found in some organisms and specialized cells. Requires Mg(2+) as cofactor.

It localises to the cytoplasm. The protein resides in the cytoskeleton. Functionally, tubulin is the major constituent of microtubules, a cylinder consisting of laterally associated linear protofilaments composed of alpha- and beta-tubulin heterodimers. Microtubules grow by the addition of GTP-tubulin dimers to the microtubule end, where a stabilizing cap forms. Below the cap, tubulin dimers are in GDP-bound state, owing to GTPase activity of alpha-tubulin. The chain is Tubulin beta-7 chain from Gossypium hirsutum (Upland cotton).